A 70-amino-acid chain; its full sequence is Small ribosomal subunit protein bS21 (70 aa).

It belongs to the bacterial ribosomal protein bS21 family.

This chain is Small ribosomal subunit protein bS21, found in Sulfurimonas denitrificans (strain ATCC 33889 / DSM 1251) (Thiomicrospira denitrificans (strain ATCC 33889 / DSM 1251)).